We begin with the raw amino-acid sequence, 184 residues long: C-phycoerythrin class 1 subunit beta (184 aa).

(2R,3E)-phycoerythrobilin contacts are provided by Cys-50 and Cys-61. Residue Asn-72 is modified to N4-methylasparagine. Positions 82 and 165 each coordinate (2R,3E)-phycoerythrobilin.

It belongs to the phycobiliprotein family. In terms of assembly, heterodimer of an alpha and a beta chain. Contains three covalently linked bilin chromophores.

The protein localises to the cellular thylakoid membrane. Light-harvesting photosynthetic bile pigment-protein from the phycobiliprotein complex. The sequence is that of C-phycoerythrin class 1 subunit beta (cpeB) from Synechococcus sp. (strain WH7803).